The primary structure comprises 110 residues: Large ribosomal subunit protein uL22 (110 aa).

It belongs to the universal ribosomal protein uL22 family. In terms of assembly, part of the 50S ribosomal subunit.

Its function is as follows. This protein binds specifically to 23S rRNA; its binding is stimulated by other ribosomal proteins, e.g. L4, L17, and L20. It is important during the early stages of 50S assembly. It makes multiple contacts with different domains of the 23S rRNA in the assembled 50S subunit and ribosome. Functionally, the globular domain of the protein is located near the polypeptide exit tunnel on the outside of the subunit, while an extended beta-hairpin is found that lines the wall of the exit tunnel in the center of the 70S ribosome. This Buchnera aphidicola subsp. Schizaphis graminum (strain Sg) protein is Large ribosomal subunit protein uL22.